The chain runs to 365 residues: Chorismate synthase (365 aa).

Residues Arg-48 and Arg-54 each contribute to the NADP(+) site. FMN-binding positions include 125–127, 237–238, Gly-277, 292–296, and Arg-318; these read RAS, NA, and KPTSS.

It belongs to the chorismate synthase family. As to quaternary structure, homotetramer. The cofactor is FMNH2.

It catalyses the reaction 5-O-(1-carboxyvinyl)-3-phosphoshikimate = chorismate + phosphate. The protein operates within metabolic intermediate biosynthesis; chorismate biosynthesis; chorismate from D-erythrose 4-phosphate and phosphoenolpyruvate: step 7/7. Functionally, catalyzes the anti-1,4-elimination of the C-3 phosphate and the C-6 proR hydrogen from 5-enolpyruvylshikimate-3-phosphate (EPSP) to yield chorismate, which is the branch point compound that serves as the starting substrate for the three terminal pathways of aromatic amino acid biosynthesis. This reaction introduces a second double bond into the aromatic ring system. This chain is Chorismate synthase, found in Polaromonas sp. (strain JS666 / ATCC BAA-500).